Reading from the N-terminus, the 519-residue chain is Dihydropyrimidinase (519 aa).

His67 and His69 together coordinate Zn(2+). Ser79 carries the phosphoserine modification. A Zn(2+)-binding site is contributed by Lys159. Residue Lys159 is modified to N6-carboxylysine. A substrate-binding site is contributed by Tyr164. 2 residues coordinate Zn(2+): His192 and His248. Residue Lys256 is modified to N6-succinyllysine. Asp326 contacts Zn(2+). A substrate-binding site is contributed by Asn347. At Thr510 the chain carries Phosphothreonine.

This sequence belongs to the metallo-dependent hydrolases superfamily. Hydantoinase/dihydropyrimidinase family. In terms of assembly, homotetramer. The cofactor is Zn(2+). Carboxylation allows a single lysine to coordinate two zinc ions.

The catalysed reaction is 5,6-dihydrouracil + H2O = 3-(carbamoylamino)propanoate + H(+). Functionally, catalyzes the second step of the reductive pyrimidine degradation, the reversible hydrolytic ring opening of dihydropyrimidines. Can catalyze the ring opening of 5,6-dihydrouracil to N-carbamyl-alanine and of 5,6-dihydrothymine to N-carbamyl-amino isobutyrate. This is Dihydropyrimidinase (Dpys) from Rattus norvegicus (Rat).